The chain runs to 406 residues: Trk system potassium uptake protein trkA homolog 1 (406 aa).

Residues 1-124 (MKAVIIGAGE…RAQVGVDLMI (124 aa)) enclose the RCK N-terminal 1 domain. NAD(+) is bound by residues 7-11 (GAGEV), aspartate 29, 70-71 (TG), and arginine 101. The RCK C-terminal domain maps to 144–225 (IDAEMFAEGK…MEDLESVFGS (82 aa)). Positions 230-348 (RTRILLIGCG…FEMVGIDMAV (119 aa)) constitute an RCK N-terminal 2 domain. Residue 232 to 262 (RILLIGCGIVGMYLAKLIDKEENADLRIIEH) coordinates NAD(+).

Functionally, part of a potassium transport system. The polypeptide is Trk system potassium uptake protein trkA homolog 1 (trkA1) (Methanosarcina mazei (Methanosarcina frisia)).